We begin with the raw amino-acid sequence, 476 residues long: 3-isopropylmalate dehydratase large subunit (476 aa).

Residues Cys355, Cys416, and Cys419 each contribute to the [4Fe-4S] cluster site.

It belongs to the aconitase/IPM isomerase family. LeuC type 1 subfamily. As to quaternary structure, heterodimer of LeuC and LeuD. [4Fe-4S] cluster is required as a cofactor.

It catalyses the reaction (2R,3S)-3-isopropylmalate = (2S)-2-isopropylmalate. It functions in the pathway amino-acid biosynthesis; L-leucine biosynthesis; L-leucine from 3-methyl-2-oxobutanoate: step 2/4. Catalyzes the isomerization between 2-isopropylmalate and 3-isopropylmalate, via the formation of 2-isopropylmaleate. This chain is 3-isopropylmalate dehydratase large subunit, found in Sphingopyxis alaskensis (strain DSM 13593 / LMG 18877 / RB2256) (Sphingomonas alaskensis).